The primary structure comprises 423 residues: ATP-dependent RNA helicase RhlB (423 aa).

The Q motif motif lies at L9–A37. One can recognise a Helicase ATP-binding domain in the interval L40–V217. ATP is bound at residue A53 to T60. The short motif at D163–D166 is the DEAD box element. A Helicase C-terminal domain is found at K241–L388. A disordered region spans residues K397–F423. Residues N400–N410 show a composition bias toward low complexity. Over residues F413–F423 the composition is skewed to basic residues.

The protein belongs to the DEAD box helicase family. RhlB subfamily. Component of the RNA degradosome, which is a multiprotein complex involved in RNA processing and mRNA degradation.

It localises to the cytoplasm. The enzyme catalyses ATP + H2O = ADP + phosphate + H(+). In terms of biological role, DEAD-box RNA helicase involved in RNA degradation. Has RNA-dependent ATPase activity and unwinds double-stranded RNA. The chain is ATP-dependent RNA helicase RhlB from Pasteurella multocida (strain Pm70).